Here is a 637-residue protein sequence, read N- to C-terminus: 1-deoxy-D-xylulose-5-phosphate synthase (637 aa).

Thiamine diphosphate is bound by residues His-76 and 117–119; that span reads GHS. Asp-148 provides a ligand contact to Mg(2+). Thiamine diphosphate contacts are provided by residues 149–150, Asn-177, Tyr-294, and Glu-381; that span reads GA. Asn-177 is a Mg(2+) binding site.

It belongs to the transketolase family. DXPS subfamily. Homodimer. Mg(2+) is required as a cofactor. It depends on thiamine diphosphate as a cofactor.

It catalyses the reaction D-glyceraldehyde 3-phosphate + pyruvate + H(+) = 1-deoxy-D-xylulose 5-phosphate + CO2. The protein operates within metabolic intermediate biosynthesis; 1-deoxy-D-xylulose 5-phosphate biosynthesis; 1-deoxy-D-xylulose 5-phosphate from D-glyceraldehyde 3-phosphate and pyruvate: step 1/1. Catalyzes the acyloin condensation reaction between C atoms 2 and 3 of pyruvate and glyceraldehyde 3-phosphate to yield 1-deoxy-D-xylulose-5-phosphate (DXP). In Neisseria meningitidis serogroup A / serotype 4A (strain DSM 15465 / Z2491), this protein is 1-deoxy-D-xylulose-5-phosphate synthase.